The sequence spans 197 residues: ATP-dependent Clp protease proteolytic subunit (197 aa).

The Nucleophile role is filled by Ser102. His127 is a catalytic residue.

This sequence belongs to the peptidase S14 family. As to quaternary structure, fourteen ClpP subunits assemble into 2 heptameric rings which stack back to back to give a disk-like structure with a central cavity, resembling the structure of eukaryotic proteasomes.

Its subcellular location is the cytoplasm. It catalyses the reaction Hydrolysis of proteins to small peptides in the presence of ATP and magnesium. alpha-casein is the usual test substrate. In the absence of ATP, only oligopeptides shorter than five residues are hydrolyzed (such as succinyl-Leu-Tyr-|-NHMec, and Leu-Tyr-Leu-|-Tyr-Trp, in which cleavage of the -Tyr-|-Leu- and -Tyr-|-Trp bonds also occurs).. In terms of biological role, cleaves peptides in various proteins in a process that requires ATP hydrolysis. Has a chymotrypsin-like activity. Plays a major role in the degradation of misfolded proteins. The polypeptide is ATP-dependent Clp protease proteolytic subunit (Borreliella afzelii (strain PKo) (Borrelia afzelii)).